Here is a 61-residue protein sequence, read N- to C-terminus: Large ribosomal subunit protein bL28 (61 aa).

Belongs to the bacterial ribosomal protein bL28 family.

The chain is Large ribosomal subunit protein bL28 from Geobacillus sp. (strain WCH70).